The following is a 275-amino-acid chain: Large ribosomal subunit protein uL2 (275 aa).

The interval 222–275 (GVAMNPVDHPMGGGEGRSSGGRHPCSPWGMPTKGYKTRKNKTTDKFIVRKRNKR) is disordered.

Belongs to the universal ribosomal protein uL2 family. In terms of assembly, part of the 50S ribosomal subunit. Forms a bridge to the 30S subunit in the 70S ribosome.

Functionally, one of the primary rRNA binding proteins. Required for association of the 30S and 50S subunits to form the 70S ribosome, for tRNA binding and peptide bond formation. It has been suggested to have peptidyltransferase activity; this is somewhat controversial. Makes several contacts with the 16S rRNA in the 70S ribosome. In Desulfatibacillum aliphaticivorans, this protein is Large ribosomal subunit protein uL2.